We begin with the raw amino-acid sequence, 316 residues long: D-alanine--D-alanine ligase (316 aa).

Residues 129–316 enclose the ATP-grasp domain; the sequence is KYILQAAGIP…ALQAEFCRYP (188 aa). Residue 162–217 participates in ATP binding; sequence EGSLLYPMFIKPANMGSSVGITKAENREELQNALQEAYRYDTRAIVEQGIEAREIE. 3 residues coordinate Mg(2+): aspartate 288, glutamate 301, and asparagine 303.

Belongs to the D-alanine--D-alanine ligase family. Requires Mg(2+) as cofactor. Mn(2+) serves as cofactor.

The protein resides in the cytoplasm. The catalysed reaction is 2 D-alanine + ATP = D-alanyl-D-alanine + ADP + phosphate + H(+). Its pathway is cell wall biogenesis; peptidoglycan biosynthesis. Functionally, cell wall formation. The sequence is that of D-alanine--D-alanine ligase (ddl) from Enterococcus gallinarum.